Reading from the N-terminus, the 375-residue chain is Platelet-derived growth factor receptor-like protein (375 aa).

The signal sequence occupies residues 1–17 (MKVWLLLGLLLLHEALG). Residues 19–63 (VAGQHPPKNKRPKEQGENRIKPTNKKAKPKIPKIKDRDTADSAPK) form a disordered region. Over residues 40-50 (PTNKKAKPKIP) the composition is skewed to basic residues. Residues 62 to 159 (PKSQSIMMQA…GYICRRDEAR (98 aa)) form the Ig-like C2-type 1 domain. Cys96 and Cys143 are oxidised to a cystine. N-linked (GlcNAc...) asparagine glycosylation occurs at Asn219. The 104-residue stretch at 272–375 (PSTTILASSN…TTVATTVEFS (104 aa)) folds into the Ig-like C2-type 2 domain. Cys293 and Cys357 are joined by a disulfide.

As to quaternary structure, forms a complex composed of PDGFRL, TNK2 and GRB2.

The protein localises to the secreted. In Rattus norvegicus (Rat), this protein is Platelet-derived growth factor receptor-like protein (Pdgfrl).